The primary structure comprises 125 residues: Large ribosomal subunit protein eL32 (125 aa).

Belongs to the eukaryotic ribosomal protein eL32 family.

In Sulfolobus acidocaldarius (strain ATCC 33909 / DSM 639 / JCM 8929 / NBRC 15157 / NCIMB 11770), this protein is Large ribosomal subunit protein eL32 (rpl32e).